The chain runs to 447 residues: Probable asparagine--tRNA ligase, cytoplasmic (447 aa).

This sequence belongs to the class-II aminoacyl-tRNA synthetase family.

It localises to the cytoplasm. It carries out the reaction tRNA(Asn) + L-asparagine + ATP = L-asparaginyl-tRNA(Asn) + AMP + diphosphate + H(+). This chain is Probable asparagine--tRNA ligase, cytoplasmic, found in Vairimorpha ceranae (strain BRL01) (Microsporidian parasite).